The primary structure comprises 161 residues: Regulator of ribonuclease activity A (161 aa).

Belongs to the RraA family. Homotrimer. Binds to both RNA-binding sites in the C-terminal region of Rne and to RhlB.

The protein resides in the cytoplasm. Globally modulates RNA abundance by binding to RNase E (Rne) and regulating its endonucleolytic activity. Can modulate Rne action in a substrate-dependent manner by altering the composition of the degradosome. Modulates RNA-binding and helicase activities of the degradosome. In Klebsiella pneumoniae (strain 342), this protein is Regulator of ribonuclease activity A.